A 448-amino-acid polypeptide reads, in one-letter code: Bifunctional protein GlmU (448 aa).

A pyrophosphorylase region spans residues 1-232 (MTARSSLTIV…EDEVRGINTK (232 aa)). Residues 11-14 (LAAG), K25, Q78, and 83-84 (GT) contribute to the UDP-N-acetyl-alpha-D-glucosamine site. Position 108 (D108) interacts with Mg(2+). UDP-N-acetyl-alpha-D-glucosamine-binding residues include G144, E158, N173, and N230. A Mg(2+)-binding site is contributed by N230. The tract at residues 233-253 (AQLAQAEAAMQARLRQAAMDA) is linker. The segment at 254 to 448 (GVTLIAPETV…FRNAKLRQTK (195 aa)) is N-acetyltransferase. Positions 319 and 337 each coordinate UDP-N-acetyl-alpha-D-glucosamine. The active-site Proton acceptor is the H349. UDP-N-acetyl-alpha-D-glucosamine-binding residues include Y352 and N363. Acetyl-CoA-binding positions include A366, 372 to 373 (NY), S409, and R426. The tract at residues 427 to 448 (SPQTTKEGAAARFRNAKLRQTK) is disordered.

It in the N-terminal section; belongs to the N-acetylglucosamine-1-phosphate uridyltransferase family. This sequence in the C-terminal section; belongs to the transferase hexapeptide repeat family. In terms of assembly, homotrimer. Mg(2+) is required as a cofactor.

Its subcellular location is the cytoplasm. It carries out the reaction alpha-D-glucosamine 1-phosphate + acetyl-CoA = N-acetyl-alpha-D-glucosamine 1-phosphate + CoA + H(+). It catalyses the reaction N-acetyl-alpha-D-glucosamine 1-phosphate + UTP + H(+) = UDP-N-acetyl-alpha-D-glucosamine + diphosphate. The protein operates within nucleotide-sugar biosynthesis; UDP-N-acetyl-alpha-D-glucosamine biosynthesis; N-acetyl-alpha-D-glucosamine 1-phosphate from alpha-D-glucosamine 6-phosphate (route II): step 2/2. Its pathway is nucleotide-sugar biosynthesis; UDP-N-acetyl-alpha-D-glucosamine biosynthesis; UDP-N-acetyl-alpha-D-glucosamine from N-acetyl-alpha-D-glucosamine 1-phosphate: step 1/1. It functions in the pathway bacterial outer membrane biogenesis; LPS lipid A biosynthesis. Catalyzes the last two sequential reactions in the de novo biosynthetic pathway for UDP-N-acetylglucosamine (UDP-GlcNAc). The C-terminal domain catalyzes the transfer of acetyl group from acetyl coenzyme A to glucosamine-1-phosphate (GlcN-1-P) to produce N-acetylglucosamine-1-phosphate (GlcNAc-1-P), which is converted into UDP-GlcNAc by the transfer of uridine 5-monophosphate (from uridine 5-triphosphate), a reaction catalyzed by the N-terminal domain. The protein is Bifunctional protein GlmU of Bradyrhizobium sp. (strain ORS 278).